The primary structure comprises 190 residues: Elongation factor P-like protein (190 aa).

It belongs to the elongation factor P family.

The chain is Elongation factor P-like protein from Marinomonas sp. (strain MWYL1).